The following is a 145-amino-acid chain: 3-hydroxyacyl-[acyl-carrier-protein] dehydratase FabZ (145 aa).

The active site involves His-51.

It belongs to the thioester dehydratase family. FabZ subfamily.

Its subcellular location is the cytoplasm. The enzyme catalyses a (3R)-hydroxyacyl-[ACP] = a (2E)-enoyl-[ACP] + H2O. Its function is as follows. Involved in unsaturated fatty acids biosynthesis. Catalyzes the dehydration of short chain beta-hydroxyacyl-ACPs and long chain saturated and unsaturated beta-hydroxyacyl-ACPs. The polypeptide is 3-hydroxyacyl-[acyl-carrier-protein] dehydratase FabZ (Staphylococcus epidermidis (strain ATCC 35984 / DSM 28319 / BCRC 17069 / CCUG 31568 / BM 3577 / RP62A)).